A 235-amino-acid polypeptide reads, in one-letter code: Rab-like protein 3 (235 aa).

The tract at residues 1 to 235 is small GTPase-like; that stretch reads MASLDRVKVL…GGNFKSLHYD (235 aa). GTP is bound by residues 16 to 21, 148 to 150, and 179 to 180; these read GVGKSS, KLD, and DC.

The protein belongs to the small GTPase superfamily. Rab family. As to quaternary structure, homodimer.

Its function is as follows. Required for KRAS signaling regulation and modulation of cell proliferation. Regulator of KRAS prenylation, and probably prenylation of other small GTPases. Required for lymphocyte development and function. Not required for myeloid cell development. This chain is Rab-like protein 3 (rabl3), found in Xenopus laevis (African clawed frog).